Reading from the N-terminus, the 228-residue chain is Ribonuclease 3 (228 aa).

The RNase III domain maps to 8-130 (LKRLERRVDY…IIGAAFLDSD (123 aa)). Glutamate 43 provides a ligand contact to Mg(2+). Aspartate 47 is a catalytic residue. Mg(2+)-binding residues include aspartate 116 and glutamate 119. The active site involves glutamate 119. Positions 157-226 (DPKTRLQEHL…ANKMLDSLSG (70 aa)) constitute a DRBM domain.

It belongs to the ribonuclease III family. Homodimer. The cofactor is Mg(2+).

The protein localises to the cytoplasm. The catalysed reaction is Endonucleolytic cleavage to 5'-phosphomonoester.. Digests double-stranded RNA. Involved in the processing of primary rRNA transcript to yield the immediate precursors to the large and small rRNAs (23S and 16S). Processes some mRNAs, and tRNAs when they are encoded in the rRNA operon. Processes pre-crRNA and tracrRNA of type II CRISPR loci if present in the organism. This is Ribonuclease 3 from Psychromonas ingrahamii (strain DSM 17664 / CCUG 51855 / 37).